The chain runs to 627 residues: MSAATACASPAAARPPLHIPLRSPPSAAHLPSAAASRRASSAACRCTASASASASPSTWDWTRWTRHFADVDQAESYASLLKFQLEEAVDNEDFAEASKLKKAILEATGNDAVAQVMSELKTAIEEQRYQDASRLTKLARTNLVGWWVGYAKDTDDSIGRIVRISPGVGRYVAKSFSPRQLVTASSGTPLFEIFLVRDDDETYTMKVVHMRPTKGTSSASSVSSATAESPAKEENESSLESSAISEGITDEANTDTTLKGDEDVEDKEQDVGNAKDSSVEGLKSVLNFFKSRIPEFKVQVINVDVSEEAELASDSSEELVQDDVKSTSENSLEDSTTEELQQDDVPDGDSDSAEDSKSPEMKLFISGVVHNKEDAGAKSYVRVPAEINNLEKDSFELYIPGKGSDRDLADTKAAKQKVADMAAKLASELMPSDVAKALWGTTKSSSKINKEVQELLKLTLSKARVKLTENTIFNRIITDSNGSDPFSGLYVGAFSPYGPEVVQLRRKFGHWNSTDEVEFFEYVEAVKLTGDLSVPAGQITFRAKIGKGKRLENRGAYPEEFGVIASYKGQGRIAQPGFKNPRWVDGELLVLNGKSTIPHLGGAELGFLYSVPEQSFLVLFDRLKLPE.

Disordered regions lie at residues 1–34 (MSAATACASPAAARPPLHIPLRSPPSAAHLPSAA), 212–277 (PTKG…AKDS), and 308–359 (EAEL…SKSP). The N-terminal 45 residues, 1–45 (MSAATACASPAAARPPLHIPLRSPPSAAHLPSAAASRRASSAACR), are a transit peptide targeting the chloroplast. Residues 217-229 (SSASSVSSATAES) show a composition bias toward low complexity. Composition is skewed to acidic residues over residues 308–321 (EAELASDSSEELVQ) and 331–353 (SLEDSTTEELQQDDVPDGDSDSA).

Its subcellular location is the plastid. The protein resides in the chloroplast. Together with EX1, enables higher plants to perceive singlet oxygen as a stress signal in plastid that activates a genetically determined nuclear stress response program which triggers a programmed cell death (PCD). This transfer of singlet oxygen-induced stress-related signals from the plastid to the nucleus that triggers genetically controlled PCD pathway is unique to photosynthetic eukaryotes and operates under mild stress conditions, impeding photosystem II (PSII) without causing photooxidative damage of the plant. The protein is Protein EXECUTER 2, chloroplastic of Oryza sativa subsp. japonica (Rice).